Consider the following 308-residue polypeptide: Atrochrysone carboxyl ACP thioesterase (308 aa).

Zn(2+)-binding residues include histidine 99, histidine 101, aspartate 103, and histidine 104. Residue aspartate 103 is the Proton donor/acceptor of the active site.

It belongs to the metallo-beta-lactamase superfamily. It depends on Zn(2+) as a cofactor.

It carries out the reaction atrochrysone carboxyl-[ACP] + H2O = atrochrysone carboxylate + holo-[ACP] + H(+). It participates in secondary metabolite biosynthesis. Its function is as follows. Atrochrysone carboxyl ACP thioesterase; part of the gene cluster that mediates the biosynthesis of physcion, a natural anthraquinone fungicide that can prevent plant fungal infections. The pathway begins with the polyketide synthase AcPKS that condenses 8 malonyl-CoA units to synthesize atrochrysone thioester which is released from the synthase by the atrochrysone carboxyl ACP thioesterase AcTE that breaks the thioester bond and leads to free atrochrysone carboxylic acid. Spontaneous decarboxylation of atrochrysone carboxylic acid leads to the formation of atrochrysone. Then, atrochrysone undergoes spontaneous dehydration and oxidation, giving the products emodin anthrone and emodin. The O-methyltransferase AcOMT then methylates the C-6 hydroxyl of emodin to form physcion. This is Atrochrysone carboxyl ACP thioesterase from Aspergillus chevalieri (Eurotium chevalieri).